Consider the following 738-residue polypeptide: 1,4-alpha-glucan branching enzyme GlgB (738 aa).

The active-site Nucleophile is aspartate 399. Glutamate 452 functions as the Proton donor in the catalytic mechanism.

Belongs to the glycosyl hydrolase 13 family. GlgB subfamily. Monomer.

It catalyses the reaction Transfers a segment of a (1-&gt;4)-alpha-D-glucan chain to a primary hydroxy group in a similar glucan chain.. Its pathway is glycan biosynthesis; glycogen biosynthesis. In terms of biological role, catalyzes the formation of the alpha-1,6-glucosidic linkages in glycogen by scission of a 1,4-alpha-linked oligosaccharide from growing alpha-1,4-glucan chains and the subsequent attachment of the oligosaccharide to the alpha-1,6 position. In Chlamydia trachomatis serovar D (strain ATCC VR-885 / DSM 19411 / UW-3/Cx), this protein is 1,4-alpha-glucan branching enzyme GlgB.